A 644-amino-acid polypeptide reads, in one-letter code: Core protein VP4 (644 aa).

Belongs to the orbivirus VP4 family.

The protein resides in the virion. Its function is as follows. The VP4 protein is one of the five proteins (with VP1, VP3, VP6 and VP7) which form the inner capsid of the virus. The sequence is that of Core protein VP4 (Segment-4) from Antilocapra americana (Pronghorn).